The following is a 457-amino-acid chain: Siroheme synthase (457 aa).

A precorrin-2 dehydrogenase /sirohydrochlorin ferrochelatase region spans residues 1–204 (MDHLPIFCQL…ADEKAVNATT (204 aa)). NAD(+) contacts are provided by residues 22 to 23 (DV) and 43 to 44 (LT). Residue Ser-128 is modified to Phosphoserine. Residues 216 to 457 (GEVVLVGAGP…RDKLNWFSNY (242 aa)) are uroporphyrinogen-III C-methyltransferase. Pro-225 provides a ligand contact to S-adenosyl-L-methionine. Asp-248 functions as the Proton acceptor in the catalytic mechanism. Lys-270 serves as the catalytic Proton donor. Residues 301–303 (GGD), Ile-306, 331–332 (TA), Met-382, and Gly-411 contribute to the S-adenosyl-L-methionine site.

It in the N-terminal section; belongs to the precorrin-2 dehydrogenase / sirohydrochlorin ferrochelatase family. The protein in the C-terminal section; belongs to the precorrin methyltransferase family.

The enzyme catalyses uroporphyrinogen III + 2 S-adenosyl-L-methionine = precorrin-2 + 2 S-adenosyl-L-homocysteine + H(+). The catalysed reaction is precorrin-2 + NAD(+) = sirohydrochlorin + NADH + 2 H(+). It catalyses the reaction siroheme + 2 H(+) = sirohydrochlorin + Fe(2+). It functions in the pathway cofactor biosynthesis; adenosylcobalamin biosynthesis; precorrin-2 from uroporphyrinogen III: step 1/1. It participates in cofactor biosynthesis; adenosylcobalamin biosynthesis; sirohydrochlorin from precorrin-2: step 1/1. The protein operates within porphyrin-containing compound metabolism; siroheme biosynthesis; precorrin-2 from uroporphyrinogen III: step 1/1. Its pathway is porphyrin-containing compound metabolism; siroheme biosynthesis; siroheme from sirohydrochlorin: step 1/1. It functions in the pathway porphyrin-containing compound metabolism; siroheme biosynthesis; sirohydrochlorin from precorrin-2: step 1/1. Its function is as follows. Multifunctional enzyme that catalyzes the SAM-dependent methylations of uroporphyrinogen III at position C-2 and C-7 to form precorrin-2 via precorrin-1. Then it catalyzes the NAD-dependent ring dehydrogenation of precorrin-2 to yield sirohydrochlorin. Finally, it catalyzes the ferrochelation of sirohydrochlorin to yield siroheme. This is Siroheme synthase from Salmonella choleraesuis (strain SC-B67).